The following is a 384-amino-acid chain: 1-deoxy-D-xylulose 5-phosphate reductoisomerase (384 aa).

Residues Thr10, Gly11, Ser12, Ile13, Gly36, and Asn122 each contribute to the NADPH site. Lys123 contacts 1-deoxy-D-xylulose 5-phosphate. Glu124 is an NADPH binding site. Asp148 is a binding site for Mn(2+). Residues Ser149, Glu150, Ser174, and His197 each coordinate 1-deoxy-D-xylulose 5-phosphate. Glu150 is a Mn(2+) binding site. Gly203 contributes to the NADPH binding site. 1-deoxy-D-xylulose 5-phosphate-binding residues include Ser210, Asn215, Lys216, and Glu219. Glu219 is a Mn(2+) binding site.

Belongs to the DXR family. The cofactor is Mg(2+). Mn(2+) is required as a cofactor.

The enzyme catalyses 2-C-methyl-D-erythritol 4-phosphate + NADP(+) = 1-deoxy-D-xylulose 5-phosphate + NADPH + H(+). It participates in isoprenoid biosynthesis; isopentenyl diphosphate biosynthesis via DXP pathway; isopentenyl diphosphate from 1-deoxy-D-xylulose 5-phosphate: step 1/6. Its function is as follows. Catalyzes the NADPH-dependent rearrangement and reduction of 1-deoxy-D-xylulose-5-phosphate (DXP) to 2-C-methyl-D-erythritol 4-phosphate (MEP). This is 1-deoxy-D-xylulose 5-phosphate reductoisomerase from Chlorobium phaeobacteroides (strain DSM 266 / SMG 266 / 2430).